The sequence spans 305 residues: Alpha-N-acetylgalactosaminide alpha-2,6-sialyltransferase 3 (305 aa).

At 1–8 (MACILKRK) the chain is on the cytoplasmic side. A helical; Signal-anchor for type II membrane protein membrane pass occupies residues 9 to 28 (SVIAVSFIAAFLFLLVVRLV). Over 29-305 (NEVNFPLLLN…IFTHPNWTLS (277 aa)) the chain is Lumenal. Cys80 and Cys229 form a disulfide bridge. Residues Asn148, Asn239, and Asn301 are each glycosylated (N-linked (GlcNAc...) asparagine).

It belongs to the glycosyltransferase 29 family. Expressed in brain and kidney. Observed in the epithelium of the proximal tubules, marginal expression was also found in the distal tubules and collecting tubules.

It localises to the golgi apparatus membrane. The enzyme catalyses an alpha-Neu5Ac-(2-&gt;3)-beta-D-Gal-(1-&gt;3)-D-GlcNAc derivative + CMP-N-acetyl-beta-neuraminate = an alpha-Neu5Ac-(2-&gt;3)-beta-D-Gal-(1-&gt;3)-[alpha-Neu5Ac-(2-&gt;6)]-D-GlcNAc derivative + CMP + H(+). It carries out the reaction a ganglioside GM1b (d18:1(4E)) + CMP-N-acetyl-beta-neuraminate = a ganglioside GD1alpha (d18:1(4E)) + CMP + H(+). It catalyses the reaction a globoside MSGG + CMP-N-acetyl-beta-neuraminate = a globoside DSGG + CMP + H(+). The catalysed reaction is 3-O-[alpha-Neu5Ac-(2-&gt;3)-beta-D-Gal-(1-&gt;3)-alpha-D-GalNAc]-L-Ser-[protein] + CMP-N-acetyl-beta-neuraminate = a 3-O-{alpha-Neu5Ac-(2-&gt;3)-beta-D-Gal-(1-&gt;3)-[alpha-Neu5Ac-(2-&gt;6)]-alpha-D-GalNAc}-L-seryl-[protein] + CMP + H(+). The enzyme catalyses 3-O-[alpha-Neu5Ac-(2-&gt;3)-beta-D-Gal-(1-&gt;3)-alpha-D-GalNAc]-L-Thr-[protein] + CMP-N-acetyl-beta-neuraminate = a 3-O-{alpha-Neu5Ac-(2-&gt;3)-beta-D-Gal-(1-&gt;3)-[alpha-Neu5Ac-(2-&gt;6)]-alpha-D-GalNAc}-L-threonyl-[protein] + CMP + H(+). The protein operates within protein modification; protein glycosylation. It functions in the pathway glycolipid biosynthesis. Functionally, transfers the sialyl group (N-acetyl-alpha-neuraminyl or NeuAc) from CMP-NeuAc to the GalNAc residue on the NeuAc-alpha-2,3-Gal-beta-1,3-GalNAc sequence of glycoproteins and glycolipids forming an alpha-2,6-linkage. Produces branched type disialyl structures by transfer of a sialyl group onto a GalNAc residue inside the backbone core chains. ST6GalNAcIII prefers glycolipids to glycoproteins, predominantly catalyzing the biosynthesis of ganglioside GD1alpha from GM1b. GD1alpha is a critical molecule in the communication and interaction between neuronal cells and their supportive cells, particularly in brain tissues, and functions as an adhesion molecule in the process of metastasis. Sialylation of glycoproteins or glycosphingolipids is very important in tumor development, neuronal development, nerve repair, immunological processes and regulation of hormone sensitivity. The polypeptide is Alpha-N-acetylgalactosaminide alpha-2,6-sialyltransferase 3 (ST6GALNAC3) (Homo sapiens (Human)).